A 447-amino-acid chain; its full sequence is MEYDEKLARFRQVHLNPFNKQQHEQGAGEEAPGITSQARLPELPPGEPEFRCPERVMDLGLSEDHFARPVGLFLASDVQQLRQAIQECKQVILDLPEHSEKQKDAVVRLIHLRLKLQELKDPNEDEPNIRVLLEHRFYKEKSKSVKQTCDKCNTVIWGLIQTWYTCTGCYYRCHSKCLNLISKPCVRSKVSHQAEYELNICPEAGLDSQDYRCAECRAPISLRGVPSEARQCDYTGQYYCSHCHWNDLAVIPARVVHNWDFEPRKVSRGSMRYLALMMSRPVLRLREINPLLFNYVEELVEIRKLRQDILLMKPYFITCREAMAARLLLQLQDRQHFVENDEMYSVQDLLDTHTGRLGCSLAETHTLFAKHIKLDCERCQAKGFVCELCREGDVLFPFDSHTSVCADCSAVFHRDCYYDNSTTCPRCARLTLRKQSLFREPGPDLDA.

Residues 17 to 47 (PFNKQQHEQGAGEEAPGITSQARLPELPPGE) are disordered. 2 Phorbol-ester/DAG-type zinc fingers span residues 134–185 (EHRF…SKPC) and 364–424 (THTL…STTC). A Phosphoserine modification is found at Ser436.

The protein belongs to the DEF8 family. In terms of assembly, interacts (via C-terminus) with PLEKHM1; this interaction is weak but increased in a RAB7A-dependent manner.

Positively regulates lysosome peripheral distribution and ruffled border formation in osteoclasts. Involved in bone resorption. This Bos taurus (Bovine) protein is Differentially expressed in FDCP 8 homolog (DEF8).